Reading from the N-terminus, the 366-residue chain is N-acetyl-6-hydroxytryptophan oxidase ivoB (366 aa).

The N-terminal stretch at 1 to 18 (MHLLSSLAALAAAITVAF) is a signal peptide. N-linked (GlcNAc...) asparagine glycosylation is found at asparagine 28 and asparagine 81. Residues histidine 87 and histidine 96 each coordinate Cu cation. N-linked (GlcNAc...) asparagine glycans are attached at residues asparagine 114 and asparagine 121. Histidine 291 is a Cu cation binding site. N-linked (GlcNAc...) asparagine glycosylation is present at asparagine 319.

It belongs to the tyrosinase family. Cu(2+) is required as a cofactor.

It functions in the pathway pigment biosynthesis. Activity is inhibited by 2,3-dihydroxynaphthalene, phenylhydrazine, diethyl dithiocarbamate and 8-hydroxyquinolene. Functionally, nonribosomal peptide synthetase; part of the pathway that mediates the biosynthesis of the gray-brown conidiophore pigment. The first step of the pathway is performed by the nonribosomal peptide synthetase ivoA that catalyzes ATP-dependent unidirectional stereoinversion of L-tryptophan to D-tryptophan with complete conversion. While the stereoinversion is catalyzed by the epimerization (E) domain of ivoA, the terminal condensation (C) domain stereoselectively hydrolyzes D-tryptophanyl-S-phosphopantetheine thioester and thus represents a non-canonical C domain function. D-tryptophan is acetylated, probably by an endogenous acetyltransferase. N-acetyltryptophan is further 6-hydroxylated into N-acetyl-6-hydroxytryptophan (AHT) by the cytochrome P450 monooxygenase ivoC. N-acetyl-6-hydroxytryptophan is substrate of the N-acetyl-6-hydroxytryptophan oxidase ivoB to produce the gray-brown conidiophore pigment. The protein is N-acetyl-6-hydroxytryptophan oxidase ivoB of Emericella nidulans (strain FGSC A4 / ATCC 38163 / CBS 112.46 / NRRL 194 / M139) (Aspergillus nidulans).